Reading from the N-terminus, the 198-residue chain is Holliday junction branch migration complex subunit RuvA (198 aa).

Residues 1–63 are domain I; it reads MYDYIKGQLT…EDAHLLFGFH (63 aa). The domain II stretch occupies residues 64–142; the sequence is TEDEKDVFLK…EAPQETGNTK (79 aa). Residues 143–147 form a flexible linker region; that stretch reads ARSNK. A domain III region spans residues 148–198; that stretch reads AGNTQLDEAIEALLALGYKATELKKIRAFFEGTSETAEQYIKSALKLLMKG.

Belongs to the RuvA family. Homotetramer. Forms an RuvA(8)-RuvB(12)-Holliday junction (HJ) complex. HJ DNA is sandwiched between 2 RuvA tetramers; dsDNA enters through RuvA and exits via RuvB. An RuvB hexamer assembles on each DNA strand where it exits the tetramer. Each RuvB hexamer is contacted by two RuvA subunits (via domain III) on 2 adjacent RuvB subunits; this complex drives branch migration. In the full resolvosome a probable DNA-RuvA(4)-RuvB(12)-RuvC(2) complex forms which resolves the HJ.

It is found in the cytoplasm. The RuvA-RuvB-RuvC complex processes Holliday junction (HJ) DNA during genetic recombination and DNA repair, while the RuvA-RuvB complex plays an important role in the rescue of blocked DNA replication forks via replication fork reversal (RFR). RuvA specifically binds to HJ cruciform DNA, conferring on it an open structure. The RuvB hexamer acts as an ATP-dependent pump, pulling dsDNA into and through the RuvAB complex. HJ branch migration allows RuvC to scan DNA until it finds its consensus sequence, where it cleaves and resolves the cruciform DNA. The protein is Holliday junction branch migration complex subunit RuvA of Streptococcus pyogenes serotype M12 (strain MGAS2096).